A 188-amino-acid chain; its full sequence is Cell division protein SepF (188 aa).

The protein belongs to the SepF family. Homodimer. Interacts with FtsZ.

Its subcellular location is the cytoplasm. In terms of biological role, cell division protein that is part of the divisome complex and is recruited early to the Z-ring. Probably stimulates Z-ring formation, perhaps through the cross-linking of FtsZ protofilaments. Its function overlaps with FtsA. In Synechococcus sp. (strain CC9605), this protein is Cell division protein SepF.